Consider the following 340-residue polypeptide: NADH-quinone oxidoreductase subunit H 2 (340 aa).

The next 8 membrane-spanning stretches (helical) occupy residues 10 to 30 (LIVAFGLIVFKVALLIAILLL), 84 to 104 (FLFKLAPILALAPPFVVFVAI), 126 to 146 (VALLFVFAVIGIEVFGVIFGG), 172 to 192 (MGFAVIGVVMLAQSMSLLDIV), 198 to 218 (VWNIVYQPVGFFVFFVAGLAE), 255 to 275 (VIVLLVSVLLVILFFGGWNGI), 279 to 299 (MPPLLWFLLKVAFFVYLFIWF), and 318 to 338 (VLLPLSMANIIITGVLLGAAA).

Belongs to the complex I subunit 1 family. NDH-1 is composed of 14 different subunits. Subunits NuoA, H, J, K, L, M, N constitute the membrane sector of the complex.

It is found in the cell inner membrane. The enzyme catalyses a quinone + NADH + 5 H(+)(in) = a quinol + NAD(+) + 4 H(+)(out). Functionally, NDH-1 shuttles electrons from NADH, via FMN and iron-sulfur (Fe-S) centers, to quinones in the respiratory chain. The immediate electron acceptor for the enzyme in this species is believed to be ubiquinone. Couples the redox reaction to proton translocation (for every two electrons transferred, four hydrogen ions are translocated across the cytoplasmic membrane), and thus conserves the redox energy in a proton gradient. This subunit may bind ubiquinone. The chain is NADH-quinone oxidoreductase subunit H 2 from Rhizobium etli (strain ATCC 51251 / DSM 11541 / JCM 21823 / NBRC 15573 / CFN 42).